Consider the following 174-residue polypeptide: C-type lectin domain family 2 member A (174 aa).

Residues 1–27 are Cytoplasmic-facing; it reads MINPELRDGRADGFIHRIVPKLIQNWK. Residues 28–48 form a helical; Signal-anchor for type II membrane protein membrane-spanning segment; sequence IGLMCFLSIIITTVCIIMIAT. Over 49–174 the chain is Extracellular; that stretch reads WSKHAKPVAC…WICSKPKYFL (126 aa). Cysteines 58 and 69 form a disulfide. The C-type lectin domain maps to 65–174; sequence VRDKCFYFSD…WICSKPKYFL (110 aa). Asn-78, Asn-130, and Asn-143 each carry an N-linked (GlcNAc...) asparagine glycan. An intrachain disulfide couples Cys-86 to Cys-167.

As to quaternary structure, homodimer; non-disulfide-linked. Interacts with KLRB1. Interacts with KLRF2. Post-translationally, N-glycosylated. As to expression, mainly expressed in skin. Also expressed in keratinocytes, spleen, thymus, small intestine, peripheral blood monocytes, bone marrow, ovary, testis and skin. High expression in CD8(+), B-lymphocytes and naive CD4(+) T-cells. Restricted mostly to proliferating lymphocytes. Not detected in myeloid leukocytes or natural killer (NK) cells.

The protein resides in the cell membrane. In terms of biological role, membrane-bound protein expressed mainly on keratinocytes which acts as a ligand to stimulate the activating receptor NKp65/KLRF2, expressed on the surface of natural killer (NK) cells. Facilitates thereby dedicated immune recognition of keratinocytes leading to natural killer cell mediated cytotoxicity. Also plays a role in modulating the extent of T-cell expansion. The sequence is that of C-type lectin domain family 2 member A (CLEC2A) from Homo sapiens (Human).